The following is a 675-amino-acid chain: Alpha-1,4-glucan:maltose-1-phosphate maltosyltransferase (675 aa).

Positions 256, 316, and 351 each coordinate alpha-maltose 1-phosphate. Asp-386 (nucleophile) is an active-site residue. Asn-387 lines the alpha-maltose 1-phosphate pocket. The Proton donor role is filled by Glu-415. 525–526 (KY) contributes to the alpha-maltose 1-phosphate binding site.

It belongs to the glycosyl hydrolase 13 family. GlgE subfamily. In terms of assembly, homodimer.

It carries out the reaction alpha-maltose 1-phosphate + [(1-&gt;4)-alpha-D-glucosyl](n) = [(1-&gt;4)-alpha-D-glucosyl](n+2) + phosphate. Maltosyltransferase that uses maltose 1-phosphate (M1P) as the sugar donor to elongate linear or branched alpha-(1-&gt;4)-glucans. Is involved in a branched alpha-glucan biosynthetic pathway from trehalose, together with TreS, Mak and GlgB. This is Alpha-1,4-glucan:maltose-1-phosphate maltosyltransferase from Corynebacterium glutamicum (strain ATCC 13032 / DSM 20300 / JCM 1318 / BCRC 11384 / CCUG 27702 / LMG 3730 / NBRC 12168 / NCIMB 10025 / NRRL B-2784 / 534).